A 140-amino-acid polypeptide reads, in one-letter code: Putative pre-16S rRNA nuclease (140 aa).

Belongs to the YqgF nuclease family.

It is found in the cytoplasm. In terms of biological role, could be a nuclease involved in processing of the 5'-end of pre-16S rRNA. The chain is Putative pre-16S rRNA nuclease from Edwardsiella ictaluri (strain 93-146).